The sequence spans 331 residues: DNA-directed RNA polymerase subunit alpha (331 aa).

The segment at Met-1–Lys-237 is alpha N-terminal domain (alpha-NTD). The tract at residues Phe-251 to Gln-331 is alpha C-terminal domain (alpha-CTD).

It belongs to the RNA polymerase alpha chain family. In terms of assembly, homodimer. The RNAP catalytic core consists of 2 alpha, 1 beta, 1 beta' and 1 omega subunit. When a sigma factor is associated with the core the holoenzyme is formed, which can initiate transcription.

The enzyme catalyses RNA(n) + a ribonucleoside 5'-triphosphate = RNA(n+1) + diphosphate. Functionally, DNA-dependent RNA polymerase catalyzes the transcription of DNA into RNA using the four ribonucleoside triphosphates as substrates. This is DNA-directed RNA polymerase subunit alpha from Blochmanniella floridana.